The primary structure comprises 511 residues: GMP synthase [glutamine-hydrolyzing] (511 aa).

The Glutamine amidotransferase type-1 domain occupies 5–195; the sequence is DIIVLDFGSQ…AKYICDCEST (191 aa). Cys-82 acts as the Nucleophile in catalysis. Residues His-169 and Glu-171 contribute to the active site. Residues 196-386 enclose the GMPS ATP-PPase domain; it reads WNMGNFAKIK…LGLSPDLVYR (191 aa). An ATP-binding site is contributed by 223-229; sequence SGGVDSS.

In terms of assembly, homodimer.

It carries out the reaction XMP + L-glutamine + ATP + H2O = GMP + L-glutamate + AMP + diphosphate + 2 H(+). It functions in the pathway purine metabolism; GMP biosynthesis; GMP from XMP (L-Gln route): step 1/1. In terms of biological role, catalyzes the synthesis of GMP from XMP. The polypeptide is GMP synthase [glutamine-hydrolyzing] (Campylobacter hominis (strain ATCC BAA-381 / DSM 21671 / CCUG 45161 / LMG 19568 / NCTC 13146 / CH001A)).